We begin with the raw amino-acid sequence, 529 residues long: Neuronal acetylcholine receptor subunit alpha-2 (529 aa).

Residues 1–26 form the signal peptide; that stretch reads MGPSCPVFLSFTKLSLWWLLLTPAGG. The interval 27–56 is disordered; the sequence is EEAKRPPPRAPGDPLSSPSPTALPQGGSHT. At 27-264 the chain is on the extracellular side; that stretch reads EEAKRPPPRA…VTYAFIIRRL (238 aa). Asparagine 79 and asparagine 129 each carry an N-linked (GlcNAc...) asparagine glycan. A disulfide bond links cysteine 183 and cysteine 197. The N-linked (GlcNAc...) asparagine glycan is linked to asparagine 235. Cysteine 247 and cysteine 248 are joined by a disulfide. 3 helical membrane passes run 265–289, 297–315, and 331–352; these read PLFYTINLIIPCLLISCLTVLVFYL, ITLCISVLLSLTVFLLLIT, and YLLFTMIFVTLSIVITVFVLNV. Topologically, residues 353-502 are cytoplasmic; it reads HHRSPSTHTM…WKYVAMVIDR (150 aa). Residues 503-521 traverse the membrane as a helical segment; the sequence is IFLWLFIIVCFLGTIGLFL.

It belongs to the ligand-gated ion channel (TC 1.A.9) family. Acetylcholine receptor (TC 1.A.9.1) subfamily. Alpha-2/CHRNA2 sub-subfamily. As to quaternary structure, neuronal AChR is composed of two different types of subunits: alpha and non-alpha (beta). CHRNA2/alpha-2 subunit can be combined to CHRNB2/beta-2 or CHRNB4/beta-4 to give rise to functional receptors. Both CHRNA2:CHRNB2 and CHRNA2:CHRNB4 nAChR complexes are heteropentamers with two subtypes: LS (low agonist sensitivity) with a (CHRNA2)3:(CHRNB2/4)2 and HS (high agonist sensitivity) with a (CHRNA2)2:(CHRNB2/4)3 stoichiometries; the subtypes differ in their subunit binding interfaces which are involved in ligand binding.

It localises to the synaptic cell membrane. The protein resides in the cell membrane. The catalysed reaction is Ca(2+)(in) = Ca(2+)(out). It catalyses the reaction K(+)(in) = K(+)(out). The enzyme catalyses Na(+)(in) = Na(+)(out). Component of neuronal acetylcholine receptors (nAChRs) that function as pentameric, ligand-gated cation channels with high calcium permeability among other activities. nAChRs are excitatory neurotrasnmitter receptors formed by a collection of nAChR subunits known to mediate synaptic transmission in the nervous system and the neuromuscular junction. Each nAchR subunit confers differential attributes to channel properties, including activation, deactivation and desensitization kinetics, pH sensitivity, cation permeability, and binding to allosteric modulators. CHRNA2 forms heteropentameric neuronal acetylcholine receptors with CHRNB2 and CHRNB4 and plays a role in nicotine dependence. In Pan troglodytes (Chimpanzee), this protein is Neuronal acetylcholine receptor subunit alpha-2 (CHRNA2).